The chain runs to 403 residues: S-adenosylmethionine sensor upstream of mTORC1 (403 aa).

Residues 1-10 are compositionally biased toward gly residues; it reads MEPGPGGRGA. The interval 1-32 is disordered; it reads MEPGPGGRGAARGQRPPNAAQPREQERKLEQE. Over residues 11–22 the composition is skewed to low complexity; it reads ARGQRPPNAAQP. The segment covering 23-32 has biased composition (basic and acidic residues); the sequence is REQERKLEQE. S-adenosyl-L-methionine-binding residues include Arg-93, Gly-170, Asp-188, Asp-200, Phe-201, and Ser-242.

Belongs to the BMT2/SAMTOR family. In terms of assembly, interacts with the GATOR1 complex; interaction is disrupted when SAMTOR binds S-adenosyl-L-methionine. Interacts with the KICSTOR complex; interaction is disrupted when SAMTOR binds S-adenosyl-L-methionine.

In terms of biological role, S-adenosyl-L-methionine-binding protein that acts as an inhibitor of mTORC1 signaling via interaction with the GATOR1 and KICSTOR complexes. Acts as a sensor of S-adenosyl-L-methionine to signal methionine sufficiency to mTORC1: in presence of methionine, binds S-adenosyl-L-methionine, leading to disrupt interaction with the GATOR1 and KICSTOR complexes and promote mTORC1 signaling. Upon methionine starvation, S-adenosyl-L-methionine levels are reduced, thereby promoting the association with GATOR1 and KICSTOR, leading to inhibit mTORC1 signaling. Probably also acts as a S-adenosyl-L-methionine-dependent methyltransferase. The chain is S-adenosylmethionine sensor upstream of mTORC1 from Mus musculus (Mouse).